Consider the following 463-residue polypeptide: Kynureninase 2 (463 aa).

Residues L134, T135, 162–165, D247, H250, and Y272 each bind pyridoxal 5'-phosphate; that span reads FPSD. The residue at position 273 (K273) is an N6-(pyridoxal phosphate)lysine. 2 residues coordinate pyridoxal 5'-phosphate: W312 and N340.

The protein belongs to the kynureninase family. Homodimer. Pyridoxal 5'-phosphate serves as cofactor.

It localises to the cytoplasm. The enzyme catalyses L-kynurenine + H2O = anthranilate + L-alanine + H(+). It catalyses the reaction 3-hydroxy-L-kynurenine + H2O = 3-hydroxyanthranilate + L-alanine + H(+). It participates in amino-acid degradation; L-kynurenine degradation; L-alanine and anthranilate from L-kynurenine: step 1/1. It functions in the pathway cofactor biosynthesis; NAD(+) biosynthesis; quinolinate from L-kynurenine: step 2/3. Its function is as follows. Catalyzes the cleavage of L-kynurenine (L-Kyn) and L-3-hydroxykynurenine (L-3OHKyn) into anthranilic acid (AA) and 3-hydroxyanthranilic acid (3-OHAA), respectively. The sequence is that of Kynureninase 2 (bna5-2) from Aspergillus niger (strain ATCC MYA-4892 / CBS 513.88 / FGSC A1513).